The following is a 227-amino-acid chain: Urease subunit gamma/beta (227 aa).

Residues 1–101 (MRLTPTERDR…LAVVADPVGG (101 aa)) are urease gamma. The tract at residues 102–227 (GGLGDDAPGA…AACGYLGADR (126 aa)) is urease beta.

This sequence in the N-terminal section; belongs to the urease gamma subunit family. It in the C-terminal section; belongs to the urease beta subunit family. In terms of assembly, heterohexamer of 3 UreC (alpha) and 3 UreAB (gamma/beta) subunits.

Its subcellular location is the cytoplasm. It catalyses the reaction urea + 2 H2O + H(+) = hydrogencarbonate + 2 NH4(+). It participates in nitrogen metabolism; urea degradation; CO(2) and NH(3) from urea (urease route): step 1/1. In Streptomyces coelicolor (strain ATCC BAA-471 / A3(2) / M145), this protein is Urease subunit gamma/beta.